Consider the following 269-residue polypeptide: S-adenosylmethionine decarboxylase proenzyme (269 aa).

The active-site Schiff-base intermediate with substrate; via pyruvic acid is the serine 118. Pyruvic acid (Ser); by autocatalysis is present on serine 118. Histidine 123 serves as the catalytic Proton acceptor; for processing activity. Cysteine 146 acts as the Proton donor; for catalytic activity in catalysis.

Belongs to the prokaryotic AdoMetDC family. Type 2 subfamily. As to quaternary structure, heterooctamer of four alpha and four beta chains arranged as a tetramer of alpha/beta heterodimers. Pyruvate is required as a cofactor. In terms of processing, is synthesized initially as an inactive proenzyme. Formation of the active enzyme involves a self-maturation process in which the active site pyruvoyl group is generated from an internal serine residue via an autocatalytic post-translational modification. Two non-identical subunits are generated from the proenzyme in this reaction, and the pyruvate is formed at the N-terminus of the alpha chain, which is derived from the carboxyl end of the proenzyme. The post-translation cleavage follows an unusual pathway, termed non-hydrolytic serinolysis, in which the side chain hydroxyl group of the serine supplies its oxygen atom to form the C-terminus of the beta chain, while the remainder of the serine residue undergoes an oxidative deamination to produce ammonia and the pyruvoyl group blocking the N-terminus of the alpha chain.

It carries out the reaction S-adenosyl-L-methionine + H(+) = S-adenosyl 3-(methylsulfanyl)propylamine + CO2. It functions in the pathway amine and polyamine biosynthesis; S-adenosylmethioninamine biosynthesis; S-adenosylmethioninamine from S-adenosyl-L-methionine: step 1/1. Catalyzes the decarboxylation of S-adenosylmethionine to S-adenosylmethioninamine (dcAdoMet), the propylamine donor required for the synthesis of the polyamines spermine and spermidine from the diamine putrescine. The sequence is that of S-adenosylmethionine decarboxylase proenzyme from Brevibacillus brevis (strain 47 / JCM 6285 / NBRC 100599).